The following is a 115-amino-acid chain: U3-lycotoxin-Ls1n (115 aa).

Residues 1-20 (MKFVLLFGVLLVTLFSYSSA) form the signal peptide. Residues 21-44 (EMLDDFDQADEDELLSLIEKEEAR) constitute a propeptide that is removed on maturation. Intrachain disulfides connect cysteine 48–cysteine 63, cysteine 55–cysteine 72, cysteine 62–cysteine 87, and cysteine 74–cysteine 85.

Belongs to the neurotoxin 19 (CSTX) family. 01 subfamily. Expressed by the venom gland.

The protein resides in the secreted. In Lycosa singoriensis (Wolf spider), this protein is U3-lycotoxin-Ls1n.